The following is a 21-amino-acid chain: Cupiennin-6c (21 aa).

A Serine amide modification is found at serine 21.

As to expression, expressed by the venom gland.

It is found in the secreted. In Cupiennius salei (American wandering spider), this protein is Cupiennin-6c.